Consider the following 612-residue polypeptide: Poly(A) RNA polymerase, mitochondrial (612 aa).

The transit peptide at 1-57 (MNSLVRRSAQQLSLWRTYCIKHNASEAASPGRNAGRPNYEEFIGRHQRQAQCSIVVQ) directs the protein to the mitochondrion. ATP contacts are provided by residues 83-89 (YCVRQDE) and 228-229 (GC). 2 residues coordinate Mg(2+): D230 and D232. A PAP-associated domain is found at 427–463 (SLSELLLQFFEFYSQFDFHNRAISLNEGKPLSKPDHS). Disordered regions lie at residues 555–574 (AGAT…KSAS) and 588–612 (SELK…RRSR).

Belongs to the DNA polymerase type-B-like family. It depends on Mg(2+) as a cofactor. Mn(2+) is required as a cofactor.

It is found in the mitochondrion. It catalyses the reaction RNA(n) + ATP = RNA(n)-3'-adenine ribonucleotide + diphosphate. Its function is as follows. Polymerase that creates the 3' poly(A) tail of mitochondrial transcripts. This is not required for transcript stability or translation but may maintain mRNA integrity by protecting 3' termini from degradation. This chain is Poly(A) RNA polymerase, mitochondrial, found in Drosophila melanogaster (Fruit fly).